A 125-amino-acid polypeptide reads, in one-letter code: Cu-Zn superoxide dismutase-like protein OPG175 (125 aa).

C52 and C102 are joined by a disulfide.

Belongs to the Cu-Zn superoxide dismutase family.

It is found in the virion. The protein localises to the host cytoplasm. Superoxide dismutase-like protein with no enzymatic activity. The chain is Cu-Zn superoxide dismutase-like protein OPG175 (OPG175) from Monkeypox virus.